We begin with the raw amino-acid sequence, 562 residues long: Laccase-2 (562 aa).

The signal sequence occupies residues methionine 1–alanine 26. 2 Plastocyanin-like domains span residues aspartate 34 to glycine 150 and aspartate 160 to valine 312. Asparagine 39, asparagine 53, asparagine 72, and asparagine 80 each carry an N-linked (GlcNAc...) asparagine glycan. Positions 84 and 86 each coordinate Cu cation. The N-linked (GlcNAc...) asparagine glycan is linked to asparagine 118. Residues histidine 129 and histidine 131 each contribute to the Cu cation site. Asparagine 189, asparagine 244, asparagine 300, asparagine 328, asparagine 376, asparagine 386, asparagine 421, and asparagine 445 each carry an N-linked (GlcNAc...) asparagine glycan. Residues aspartate 411–serine 546 enclose the Plastocyanin-like 3 domain. Residues histidine 463, histidine 466, histidine 468, histidine 525, cysteine 526, histidine 527, and histidine 531 each contribute to the Cu cation site.

The protein belongs to the multicopper oxidase family. The cofactor is Cu cation.

Its subcellular location is the secreted. The protein localises to the extracellular space. The protein resides in the apoplast. The enzyme catalyses 4 hydroquinone + O2 = 4 benzosemiquinone + 2 H2O. In terms of biological role, lignin degradation and detoxification of lignin-derived products. The protein is Laccase-2 (LAC2) of Oryza sativa subsp. japonica (Rice).